We begin with the raw amino-acid sequence, 238 residues long: Large ribosomal subunit protein uL2 (238 aa).

The disordered stretch occupies residues 201-238 (PFGGGGRQHPGRPKTVSRNTPPGRKVGSIAARRTGVGH).

It belongs to the universal ribosomal protein uL2 family. As to quaternary structure, part of the 50S ribosomal subunit. Forms a bridge to the 30S subunit in the 70S ribosome.

One of the primary rRNA binding proteins. Required for association of the 30S and 50S subunits to form the 70S ribosome, for tRNA binding and peptide bond formation. It has been suggested to have peptidyltransferase activity; this is somewhat controversial. Makes several contacts with the 16S rRNA in the 70S ribosome. The polypeptide is Large ribosomal subunit protein uL2 (Methanocella arvoryzae (strain DSM 22066 / NBRC 105507 / MRE50)).